A 218-amino-acid polypeptide reads, in one-letter code: Elongation factor Ts (218 aa).

The interval 82-85 (TDFV) is involved in Mg(2+) ion dislocation from EF-Tu.

It belongs to the EF-Ts family.

The protein resides in the cytoplasm. Functionally, associates with the EF-Tu.GDP complex and induces the exchange of GDP to GTP. It remains bound to the aminoacyl-tRNA.EF-Tu.GTP complex up to the GTP hydrolysis stage on the ribosome. The protein is Elongation factor Ts of Prochlorococcus marinus (strain MIT 9211).